Here is a 332-residue protein sequence, read N- to C-terminus: Holliday junction branch migration complex subunit RuvB (332 aa).

Residues 1–181 (MARILDNDVM…FGITGHMEYY (181 aa)) are large ATPase domain (RuvB-L). Residues Leu-20, Arg-21, Gly-62, Lys-65, Thr-66, Thr-67, 128–130 (EDF), Arg-171, Tyr-181, and Arg-218 contribute to the ATP site. Residue Thr-66 coordinates Mg(2+). Positions 182 to 252 (QEKDLTEIVE…ITDRALTMLD (71 aa)) are small ATPAse domain (RuvB-S). Positions 255–332 (REGLDYIDQK…RHLGYPYQNT (78 aa)) are head domain (RuvB-H). DNA is bound by residues Arg-291, Arg-310, Arg-312, and Arg-315.

It belongs to the RuvB family. As to quaternary structure, homohexamer. Forms an RuvA(8)-RuvB(12)-Holliday junction (HJ) complex. HJ DNA is sandwiched between 2 RuvA tetramers; dsDNA enters through RuvA and exits via RuvB. An RuvB hexamer assembles on each DNA strand where it exits the tetramer. Each RuvB hexamer is contacted by two RuvA subunits (via domain III) on 2 adjacent RuvB subunits; this complex drives branch migration. In the full resolvosome a probable DNA-RuvA(4)-RuvB(12)-RuvC(2) complex forms which resolves the HJ.

The protein resides in the cytoplasm. It catalyses the reaction ATP + H2O = ADP + phosphate + H(+). Functionally, the RuvA-RuvB-RuvC complex processes Holliday junction (HJ) DNA during genetic recombination and DNA repair, while the RuvA-RuvB complex plays an important role in the rescue of blocked DNA replication forks via replication fork reversal (RFR). RuvA specifically binds to HJ cruciform DNA, conferring on it an open structure. The RuvB hexamer acts as an ATP-dependent pump, pulling dsDNA into and through the RuvAB complex. RuvB forms 2 homohexamers on either side of HJ DNA bound by 1 or 2 RuvA tetramers; 4 subunits per hexamer contact DNA at a time. Coordinated motions by a converter formed by DNA-disengaged RuvB subunits stimulates ATP hydrolysis and nucleotide exchange. Immobilization of the converter enables RuvB to convert the ATP-contained energy into a lever motion, pulling 2 nucleotides of DNA out of the RuvA tetramer per ATP hydrolyzed, thus driving DNA branch migration. The RuvB motors rotate together with the DNA substrate, which together with the progressing nucleotide cycle form the mechanistic basis for DNA recombination by continuous HJ branch migration. Branch migration allows RuvC to scan DNA until it finds its consensus sequence, where it cleaves and resolves cruciform DNA. This Streptococcus pyogenes serotype M3 (strain ATCC BAA-595 / MGAS315) protein is Holliday junction branch migration complex subunit RuvB.